The following is a 207-amino-acid chain: Large ribosomal subunit protein uL4 (207 aa).

Positions Lys62 to Gly85 are disordered.

The protein belongs to the universal ribosomal protein uL4 family. Part of the 50S ribosomal subunit.

Its function is as follows. One of the primary rRNA binding proteins, this protein initially binds near the 5'-end of the 23S rRNA. It is important during the early stages of 50S assembly. It makes multiple contacts with different domains of the 23S rRNA in the assembled 50S subunit and ribosome. Functionally, forms part of the polypeptide exit tunnel. This is Large ribosomal subunit protein uL4 from Geobacter sp. (strain M21).